Consider the following 293-residue polypeptide: Triosephosphate isomerase (293 aa).

Substrate is bound at residue 25–27 (NWK). The active-site Electrophile is the His117. Catalysis depends on Glu218, which acts as the Proton acceptor.

It belongs to the triosephosphate isomerase family. In terms of assembly, homodimer.

The protein resides in the cytoplasm. The catalysed reaction is D-glyceraldehyde 3-phosphate = dihydroxyacetone phosphate. It participates in carbohydrate biosynthesis; gluconeogenesis. The protein operates within carbohydrate degradation; glycolysis; D-glyceraldehyde 3-phosphate from glycerone phosphate: step 1/1. Its function is as follows. Involved in the gluconeogenesis. Catalyzes stereospecifically the conversion of dihydroxyacetone phosphate (DHAP) to D-glyceraldehyde-3-phosphate (G3P). The polypeptide is Triosephosphate isomerase (Tropheryma whipplei (strain Twist) (Whipple's bacillus)).